The sequence spans 178 residues: Small ribosomal subunit protein uS4 (178 aa).

The 63-residue stretch at 104 to 166 (RRLQTIVYRK…PNSPMASENH (63 aa)) folds into the S4 RNA-binding domain. The segment at 158-178 (NSPMASENHPERTAAVSEENQ) is disordered.

It belongs to the universal ribosomal protein uS4 family. Part of the 30S ribosomal subunit. Contacts protein S5. The interaction surface between S4 and S5 is involved in control of translational fidelity.

Its function is as follows. One of the primary rRNA binding proteins, it binds directly to 16S rRNA where it nucleates assembly of the body of the 30S subunit. Functionally, with S5 and S12 plays an important role in translational accuracy. The chain is Small ribosomal subunit protein uS4 from Methanococcus maripaludis (strain C6 / ATCC BAA-1332).